Reading from the N-terminus, the 204-residue chain is Putative AgrB-like protein (204 aa).

The next 4 helical transmembrane spans lie at 52-74, 87-107, 111-131, and 156-176; these read YGIA…YLWL, LNCT…FQNV, NWIV…FAPA, and LILT…LIMI.

The protein belongs to the AgrB family.

The protein localises to the cell membrane. Functionally, may be involved in the proteolytic processing of a quorum sensing system signal molecule precursor. The protein is Putative AgrB-like protein of Listeria monocytogenes serotype 4a (strain HCC23).